The following is a 412-amino-acid chain: Zinc finger protein 821 (412 aa).

Positions 26–83 (RQAMMKTDFPGDLGSQRQAIQQLRDQDSSSSDSEGDEEETTQDEVSSHTSEEDGGVVK) are disordered. The span at 58–67 (SEGDEEETTQ) shows a compositional bias: acidic residues. 2 consecutive C2H2-type zinc fingers follow at residues 116-140 (ELCQ…VYQH) and 150-172 (YMCP…LLIH). Residues 257 to 366 (KWALRRQNEP…EKMDMMLRAQ (110 aa)) adopt a coiled-coil conformation. The interval 278 to 319 (RTAKKSRRDNETPEEREVRRMRDREAKRLQRMQETDEQRARR) is disordered.

This sequence belongs to the krueppel C2H2-type zinc-finger protein family.

The protein localises to the nucleus. Functionally, may be involved in transcriptional regulation. The sequence is that of Zinc finger protein 821 (ZNF821) from Homo sapiens (Human).